We begin with the raw amino-acid sequence, 678 residues long: Putative pentatricopeptide repeat-containing protein At3g18840 (678 aa).

PPR repeat units follow at residues 22-56 (TAVS…NVYS), 57-84 (WNAV…NCER), 85-116 (DLIT…MHRK), 124-158 (DDFT…GNDG), 159-190 (TKFA…CVEF), 192-222 (DSVA…NPEL), 224-258 (DTIS…GLKW), 259-293 (DEHS…GSYS), 294-324 (NKFV…YGFG), 325-359 (NLYS…NLVV), 360-390 (WTAM…ETNT), 392-426 (DSLV…GILM), 427-457 (DKKL…SFER), 458-492 (DTVM…GFKP), 493-528 (DEIT…NISP), and 529-563 (ETGH…EKDA). The tract at residues 565-640 (ILGAFLNACS…FSGCSWANID (76 aa)) is type E motif. The interval 641 to 671 (KQFHMFTSSDISHYETEAIYAMLHFVTKDLS) is type E(+) motif.

It belongs to the PPR family. PCMP-E subfamily.

In Arabidopsis thaliana (Mouse-ear cress), this protein is Putative pentatricopeptide repeat-containing protein At3g18840 (PCMP-E92).